Reading from the N-terminus, the 199-residue chain is Small heat shock protein hspG4 (199 aa).

One can recognise a sHSP domain in the interval 30–199 (NKRVDIIPSM…SSNTIKININ (170 aa)). Residues 83–105 (KNQQQQQQQQQLENSNNKENDEP) form a disordered region.

It belongs to the small heat shock protein (HSP20) family.

In Dictyostelium discoideum (Social amoeba), this protein is Small heat shock protein hspG4 (hspG4).